Reading from the N-terminus, the 691-residue chain is Ubiquitin-like domain-containing protein CIP73 (691 aa).

In terms of domain architecture, Ubiquitin-like spans 22 to 97 (IEIKIKMLDS…LHLVARHPDL (76 aa)). Disordered stretches follow at residues 92-118 (ARHP…TGHG), 176-203 (TGLG…ISSD), 264-283 (RNEE…EGLS), 432-473 (ASTT…ASIA), 499-554 (SVNT…SSRV), 590-624 (EIHV…EPNV), and 645-691 (HIGR…QKME). Composition is skewed to polar residues over residues 104 to 118 (PNHS…TGHG), 178 to 189 (LGRTSDFTGNPS), 273 to 283 (SRLSSTPEGLS), 446 to 465 (TQSA…QTTS), and 499 to 523 (SVNT…STAE). A compositionally biased stretch (basic and acidic residues) spans 525-535 (TLHRQSMEDSA). Residues 536–554 (RNGTLPTPNTQQEPSSSRV) show a composition bias toward polar residues. Low complexity predominate over residues 597–617 (SSQGTTAGVTSAATSSGAAQA).

In terms of assembly, interacts with CCAMK. Post-translationally, phosphorylated at the N-terminus by CCAMK. As to expression, highly epressed in roots. Expressed at very low levels in leaves and stems.

It is found in the nucleus. Its function is as follows. Involved in root nodulation. Required for root nodule organogenesis after infection by symbiotic rhizobia. Probably not involved in arbuscular mycorrhizal (AM) symbiosis. Acts downstream of CCAMK. This is Ubiquitin-like domain-containing protein CIP73 from Lotus japonicus (Lotus corniculatus var. japonicus).